Consider the following 198-residue polypeptide: Recombination protein RecR (198 aa).

The segment at 57-72 (CSVCGHITENDPCYIC) adopts a C4-type zinc-finger fold. The Toprim domain maps to 80–175 (SVICVVEDDK…KVTRLAQGLS (96 aa)).

Belongs to the RecR family.

Its function is as follows. May play a role in DNA repair. It seems to be involved in an RecBC-independent recombinational process of DNA repair. It may act with RecF and RecO. The polypeptide is Recombination protein RecR (Staphylococcus epidermidis (strain ATCC 35984 / DSM 28319 / BCRC 17069 / CCUG 31568 / BM 3577 / RP62A)).